A 734-amino-acid chain; its full sequence is NAD(P)H-quinone oxidoreductase subunit 5, chloroplastic (734 aa).

16 helical membrane-spanning segments follow: residues 9 to 29 (WVIP…LFLV), 39 to 59 (IWAF…VHLS), 89 to 109 (IDPL…LVLI), 125 to 145 (FVYI…SNLI), 147 to 167 (IYFF…FWFT), 185 to 205 (GDFG…SLEF), 224 to 244 (LLTI…SAQF), 258 to 278 (TPIS…FLIA), 280 to 300 (LLPL…IGTL), 327 to 347 (LGYM…FHLI), 354 to 374 (ALLF…VGYS), 396 to 416 (TCFL…CFWS), 425 to 445 (WLYS…TAFY), 542 to 562 (LFPL…GIHF), 605 to 625 (SLAI…YSFF), and 714 to 734 (ISSY…FFLS).

It belongs to the complex I subunit 5 family. In terms of assembly, NDH is composed of at least 16 different subunits, 5 of which are encoded in the nucleus.

Its subcellular location is the plastid. The protein resides in the chloroplast thylakoid membrane. The catalysed reaction is a plastoquinone + NADH + (n+1) H(+)(in) = a plastoquinol + NAD(+) + n H(+)(out). It carries out the reaction a plastoquinone + NADPH + (n+1) H(+)(in) = a plastoquinol + NADP(+) + n H(+)(out). NDH shuttles electrons from NAD(P)H:plastoquinone, via FMN and iron-sulfur (Fe-S) centers, to quinones in the photosynthetic chain and possibly in a chloroplast respiratory chain. The immediate electron acceptor for the enzyme in this species is believed to be plastoquinone. Couples the redox reaction to proton translocation, and thus conserves the redox energy in a proton gradient. The sequence is that of NAD(P)H-quinone oxidoreductase subunit 5, chloroplastic (ndhF) from Oryza nivara (Indian wild rice).